The primary structure comprises 650 residues: Acetyl-coenzyme A synthetase (650 aa).

CoA is bound by residues 191-194, T311, and N335; that span reads RGGR. ATP contacts are provided by residues 387–389, 411–416, D500, and R515; these read GEP and DTWWQT. S523 contacts CoA. An ATP-binding site is contributed by R526. Mg(2+) contacts are provided by V537, H539, and V542. R584 provides a ligand contact to CoA. Position 609 is an N6-acetyllysine (K609).

Belongs to the ATP-dependent AMP-binding enzyme family. The cofactor is Mg(2+). Post-translationally, acetylated. Deacetylation by the SIR2-homolog deacetylase activates the enzyme.

It carries out the reaction acetate + ATP + CoA = acetyl-CoA + AMP + diphosphate. In terms of biological role, catalyzes the conversion of acetate into acetyl-CoA (AcCoA), an essential intermediate at the junction of anabolic and catabolic pathways. AcsA undergoes a two-step reaction. In the first half reaction, AcsA combines acetate with ATP to form acetyl-adenylate (AcAMP) intermediate. In the second half reaction, it can then transfer the acetyl group from AcAMP to the sulfhydryl group of CoA, forming the product AcCoA. The sequence is that of Acetyl-coenzyme A synthetase from Shewanella baltica (strain OS195).